The chain runs to 337 residues: Ferrochelatase (337 aa).

Fe cation contacts are provided by His-189 and Glu-293.

This sequence belongs to the ferrochelatase family.

It is found in the cytoplasm. It catalyses the reaction heme b + 2 H(+) = protoporphyrin IX + Fe(2+). It participates in porphyrin-containing compound metabolism; protoheme biosynthesis; protoheme from protoporphyrin-IX: step 1/1. In terms of biological role, catalyzes the ferrous insertion into protoporphyrin IX. The protein is Ferrochelatase of Pseudomonas putida (strain W619).